Reading from the N-terminus, the 732-residue chain is uncharacterized protein (732 aa).

2 disordered regions span residues 38–90 (TTLA…NNNK) and 226–629 (EESP…MDYQ). Residues 47–56 (QQQQQQQQQQ) are compositionally biased toward low complexity. Positions 57 to 76 (PPSSSTTKEGGATTTQDNKL) are enriched in polar residues. Low complexity-rich tracts occupy residues 77-89 (TANG…NNNN), 231-247 (TTTT…TTAA), and 254-318 (TTTT…GTNS). Residues 327-338 (KAKKGVPKKAPT) are compositionally biased toward basic residues. Low complexity-rich tracts occupy residues 339–383 (KKQP…APKT), 401–421 (KTSK…STTK), and 487–523 (SAST…IKSK). Acidic residues predominate over residues 553-566 (AAAEEQEEEEEEDN). Low complexity-rich tracts occupy residues 567–577 (SNGIQNNNSSN) and 593–609 (DNFS…NGLL). The segment covering 610-621 (SEDDDDDDDDDN) has biased composition (acidic residues).

This is an uncharacterized protein from Dictyostelium discoideum (Social amoeba).